The chain runs to 367 residues: Phospho-N-acetylmuramoyl-pentapeptide-transferase (367 aa).

The next 10 membrane-spanning stretches (helical) occupy residues 34–54, 78–98, 101–121, 135–155, 175–195, 206–226, 246–266, 270–290, 295–315, and 344–364; these read GAVVTGALFVFLFGPWIIDHL, TPTMGGLMILSGLTVGTVLWA, LNPYVWIVLAVTLGFGFVGFY, FGSKLRLLIEAAIALVACYAL, TVLHFGWFFVVFGAFVIVGAG, GLAIVPVMIATASFAMIAYLA, LAVLCGALLGAGLGFLWFNAP, IFMGDTGSLALGGMLGAIAVA, IVLAVIGGLFVLEAVSVIVQV, and QIVIRFWIISVMLALAGLSTL.

The protein belongs to the glycosyltransferase 4 family. MraY subfamily. The cofactor is Mg(2+).

It localises to the cell inner membrane. It carries out the reaction UDP-N-acetyl-alpha-D-muramoyl-L-alanyl-gamma-D-glutamyl-meso-2,6-diaminopimeloyl-D-alanyl-D-alanine + di-trans,octa-cis-undecaprenyl phosphate = di-trans,octa-cis-undecaprenyl diphospho-N-acetyl-alpha-D-muramoyl-L-alanyl-D-glutamyl-meso-2,6-diaminopimeloyl-D-alanyl-D-alanine + UMP. The protein operates within cell wall biogenesis; peptidoglycan biosynthesis. Functionally, catalyzes the initial step of the lipid cycle reactions in the biosynthesis of the cell wall peptidoglycan: transfers peptidoglycan precursor phospho-MurNAc-pentapeptide from UDP-MurNAc-pentapeptide onto the lipid carrier undecaprenyl phosphate, yielding undecaprenyl-pyrophosphoryl-MurNAc-pentapeptide, known as lipid I. The sequence is that of Phospho-N-acetylmuramoyl-pentapeptide-transferase from Bradyrhizobium diazoefficiens (strain JCM 10833 / BCRC 13528 / IAM 13628 / NBRC 14792 / USDA 110).